The following is a 635-amino-acid chain: Threonine--tRNA ligase (635 aa).

A TGS domain is found at 1–61 (MINISFPDGS…DNDCKFRILT (61 aa)). The segment at 242-533 (DHRKLGRELD…LIEEYAGRFP (292 aa)) is catalytic. Cys-333, His-384, and His-510 together coordinate Zn(2+).

The protein belongs to the class-II aminoacyl-tRNA synthetase family. As to quaternary structure, homodimer. It depends on Zn(2+) as a cofactor.

Its subcellular location is the cytoplasm. The catalysed reaction is tRNA(Thr) + L-threonine + ATP = L-threonyl-tRNA(Thr) + AMP + diphosphate + H(+). Its function is as follows. Catalyzes the attachment of threonine to tRNA(Thr) in a two-step reaction: L-threonine is first activated by ATP to form Thr-AMP and then transferred to the acceptor end of tRNA(Thr). Also edits incorrectly charged L-seryl-tRNA(Thr). This chain is Threonine--tRNA ligase, found in Rickettsia rickettsii (strain Sheila Smith).